The sequence spans 81 residues: Putative sulfur carrier protein VNG_5061C/VNG_5236C/VNG_6059C/VNG_6467C (81 aa).

The active-site Cysteine persulfide intermediate is the Cys18.

This sequence belongs to the sulfur carrier protein TusA family.

The protein is Putative sulfur carrier protein VNG_5061C/VNG_5236C/VNG_6059C/VNG_6467C of Halobacterium salinarum (strain ATCC 700922 / JCM 11081 / NRC-1) (Halobacterium halobium).